We begin with the raw amino-acid sequence, 218 residues long: uncharacterized protein (218 aa).

2 helical membrane-spanning segments follow: residues 14 to 34 (CLLSIITILLYWYLRFVYFTS) and 175 to 195 (LIIPIPFGTIKIIVGSPLALV).

The protein to H.pylori HP0270.

Its subcellular location is the cell membrane. This is an uncharacterized protein from Rickettsia prowazekii (strain Madrid E).